The sequence spans 278 residues: 3-methyl-2-oxobutanoate hydroxymethyltransferase (278 aa).

Mg(2+)-binding residues include Asp43 and Asp82. 3-methyl-2-oxobutanoate is bound by residues Asp43 to Ser44, Asp82, and Lys112. Glu114 contributes to the Mg(2+) binding site. The active-site Proton acceptor is the Glu181.

The protein belongs to the PanB family. As to quaternary structure, homodecamer; pentamer of dimers. It depends on Mg(2+) as a cofactor.

It localises to the cytoplasm. The catalysed reaction is 3-methyl-2-oxobutanoate + (6R)-5,10-methylene-5,6,7,8-tetrahydrofolate + H2O = 2-dehydropantoate + (6S)-5,6,7,8-tetrahydrofolate. It participates in cofactor biosynthesis; (R)-pantothenate biosynthesis; (R)-pantoate from 3-methyl-2-oxobutanoate: step 1/2. Catalyzes the reversible reaction in which hydroxymethyl group from 5,10-methylenetetrahydrofolate is transferred onto alpha-ketoisovalerate to form ketopantoate. The chain is 3-methyl-2-oxobutanoate hydroxymethyltransferase from Bacillus cereus (strain B4264).